We begin with the raw amino-acid sequence, 248 residues long: Aspartate/glutamate leucyltransferase (248 aa).

This sequence belongs to the R-transferase family. Bpt subfamily.

Its subcellular location is the cytoplasm. The catalysed reaction is N-terminal L-glutamyl-[protein] + L-leucyl-tRNA(Leu) = N-terminal L-leucyl-L-glutamyl-[protein] + tRNA(Leu) + H(+). The enzyme catalyses N-terminal L-aspartyl-[protein] + L-leucyl-tRNA(Leu) = N-terminal L-leucyl-L-aspartyl-[protein] + tRNA(Leu) + H(+). Functionally, functions in the N-end rule pathway of protein degradation where it conjugates Leu from its aminoacyl-tRNA to the N-termini of proteins containing an N-terminal aspartate or glutamate. The polypeptide is Aspartate/glutamate leucyltransferase (Methylorubrum populi (strain ATCC BAA-705 / NCIMB 13946 / BJ001) (Methylobacterium populi)).